The following is an 836-amino-acid chain: Probable ribonuclease ZC3H12B (836 aa).

A disordered region spans residues 1-92 (MTATAEVETP…SPCLDRPSFS (92 aa)). Residues 8-28 (ETPKMEKSASKEEKQQPKQDS) are compositionally biased toward basic and acidic residues. Residues 35–46 (DSEEWMSSESDP) show a composition bias toward acidic residues. Polar residues predominate over residues 50–60 (SLKSSDNSKSC). The span at 70–80 (KEMHSKPHRQL) shows a compositional bias: basic residues. Residues 190 to 345 (LRPVVIDGSN…LGRHGPSLEN (156 aa)) form the RNase NYN domain. The C3H1-type zinc-finger motif lies at 355 to 380 (EHKKQPCPYGKKCTYGHKCKYYHPER).

It belongs to the ZC3H12 family. Mg(2+) serves as cofactor.

May function as RNase and regulate the levels of target RNA species. This chain is Probable ribonuclease ZC3H12B (ZC3H12B), found in Homo sapiens (Human).